We begin with the raw amino-acid sequence, 239 residues long: Probable transcriptional regulatory protein BBR47_14810 (239 aa).

This sequence belongs to the TACO1 family. YeeN subfamily.

Its subcellular location is the cytoplasm. This chain is Probable transcriptional regulatory protein BBR47_14810, found in Brevibacillus brevis (strain 47 / JCM 6285 / NBRC 100599).